A 503-amino-acid polypeptide reads, in one-letter code: 3-octaprenyl-4-hydroxybenzoate carboxy-lyase (503 aa).

Position 176 (N176) interacts with Mn(2+). Prenylated FMN contacts are provided by residues 179 to 181 (IYR), 193 to 195 (RWL), and 198 to 199 (RG). E242 lines the Mn(2+) pocket. D303 functions as the Proton donor in the catalytic mechanism.

It belongs to the UbiD family. In terms of assembly, homohexamer. Prenylated FMN is required as a cofactor. Requires Mn(2+) as cofactor.

It is found in the cell membrane. The catalysed reaction is a 4-hydroxy-3-(all-trans-polyprenyl)benzoate + H(+) = a 2-(all-trans-polyprenyl)phenol + CO2. It functions in the pathway cofactor biosynthesis; ubiquinone biosynthesis. In terms of biological role, catalyzes the decarboxylation of 3-octaprenyl-4-hydroxy benzoate to 2-octaprenylphenol, an intermediate step in ubiquinone biosynthesis. The sequence is that of 3-octaprenyl-4-hydroxybenzoate carboxy-lyase from Ralstonia nicotianae (strain ATCC BAA-1114 / GMI1000) (Ralstonia solanacearum).